Here is a 164-residue protein sequence, read N- to C-terminus: Glutamate uptake regulatory protein (164 aa).

The HTH asnC-type domain maps to 5-66; it reads LDDFDIKILD…LLDPQKIGLG (62 aa). Positions 24 to 43 form a DNA-binding region, H-T-H motif; it reads MAELSEKTGLSANACWRRIR.

Functionally, represses the secondary, H(+)-coupled glutamate uptake system (Gluemp) genes. The chain is Glutamate uptake regulatory protein (grp) from Zymomonas mobilis subsp. mobilis (strain ATCC 10988 / DSM 424 / LMG 404 / NCIMB 8938 / NRRL B-806 / ZM1).